We begin with the raw amino-acid sequence, 185 residues long: MSETDSTFHEMREPQLEKVVVHMAVGEGGRELANAEEILQEIAGQTAVRTTATRAASQFGAREGDPIGAKVTLRGADAQSFLEKALPLVTISERQFDETGNFSFGVEEHTTFPSQEYDPQIGIYGLDVTVNLTRPGYRVTKRDKASQPIPSRHRLTPSDAVQFIESEFTVDITRVSADTRDGGDN.

This sequence belongs to the universal ribosomal protein uL5 family. As to quaternary structure, part of the 50S ribosomal subunit; contacts the 5S rRNA and probably tRNA. Forms a bridge to the 30S subunit in the 70S ribosome.

In terms of biological role, this is one of the proteins that bind and probably mediate the attachment of the 5S RNA into the large ribosomal subunit, where it forms part of the central protuberance. In the 70S ribosome it contacts protein S13 of the 30S subunit (bridge B1b), connecting the 2 subunits; this bridge is implicated in subunit movement. May contact the P site tRNA; the 5S rRNA and some of its associated proteins might help stabilize positioning of ribosome-bound tRNAs. The polypeptide is Large ribosomal subunit protein uL5 (Haloquadratum walsbyi (strain DSM 16790 / HBSQ001)).